The chain runs to 193 residues: 3-isopropylmalate dehydratase small subunit (193 aa).

This sequence belongs to the LeuD family. LeuD type 1 subfamily. As to quaternary structure, heterodimer of LeuC and LeuD.

It catalyses the reaction (2R,3S)-3-isopropylmalate = (2S)-2-isopropylmalate. It functions in the pathway amino-acid biosynthesis; L-leucine biosynthesis; L-leucine from 3-methyl-2-oxobutanoate: step 2/4. Functionally, catalyzes the isomerization between 2-isopropylmalate and 3-isopropylmalate, via the formation of 2-isopropylmaleate. This Bacillus cereus (strain AH820) protein is 3-isopropylmalate dehydratase small subunit.